The primary structure comprises 139 residues: Ribulose bisphosphate carboxylase small subunit, plasmid (139 aa).

It belongs to the RuBisCO small chain family. In terms of assembly, heterohexadecamer of 8 large and 8 small subunits.

Functionally, ruBisCO catalyzes two reactions: the carboxylation of D-ribulose 1,5-bisphosphate, the primary event in carbon dioxide fixation, as well as the oxidative fragmentation of the pentose substrate. Both reactions occur simultaneously and in competition at the same active site. Although the small subunit is not catalytic it is essential for maximal activity. The chain is Ribulose bisphosphate carboxylase small subunit, plasmid from Cupriavidus necator (strain ATCC 17699 / DSM 428 / KCTC 22496 / NCIMB 10442 / H16 / Stanier 337) (Ralstonia eutropha).